A 155-amino-acid chain; its full sequence is F-box only protein 48 (155 aa).

A disordered region spans residues 1–27 (MHKNSKRNNNLRVSHTEANSVDAEKEK). Polar residues predominate over residues 7–19 (RNNNLRVSHTEAN). The F-box domain occupies 32 to 79 (NNFFELLPAEITFKIFSQLDIRSLCRASLTCRSWNDTIRNSDSLWKPH).

In Homo sapiens (Human), this protein is F-box only protein 48 (FBXO48).